A 148-amino-acid chain; its full sequence is SPbeta prophage-derived uncharacterized protein YomK (148 aa).

Transmembrane regions (helical) follow at residues 72-92 (WGIG…LFGV) and 104-124 (NALI…RNII).

Its subcellular location is the cell membrane. In Bacillus subtilis (strain 168), this protein is SPbeta prophage-derived uncharacterized protein YomK (yomK).